Reading from the N-terminus, the 466-residue chain is Teichoic acids export ATP-binding protein TagH (466 aa).

The region spanning 27–249 (NKAKSLIGSN…YEKFVQWFKK (223 aa)) is the ABC transporter domain. 63–70 (GLNGAGKS) is an ATP binding site. Positions 250–466 (LPKKEQEKFK…TTEQSDGANQ (217 aa)) are unknown. 2 disordered regions span residues 356–403 (NMTS…SNQN) and 439–466 (IHPG…GANQ). Basic residues predominate over residues 373–384 (PKKKVSQAKKTT). The segment covering 385–403 (KVSSTQKNTSSSSSTSNQN) has biased composition (low complexity). One can recognise a LysM domain in the interval 403–447 (NTYIVQAGDSLSIIAENHGYSVEEIQQVNPGVDFSVIHPGQEINL). Residues 449–466 (EPTTSANSTTEQSDGANQ) are compositionally biased toward polar residues.

It belongs to the ABC transporter superfamily. Teichoic acids exporter (TC 3.A.1.104.1) family. As to quaternary structure, the complex is composed of two ATP-binding proteins (TagH) and two transmembrane proteins (TagG).

It localises to the cell membrane. The catalysed reaction is ATP + H2O + teichoic acidSide 1 = ADP + phosphate + teichoic acidSide 2.. Part of the ABC transporter complex TagGH involved in teichoic acids export. Responsible for energy coupling to the transport system. The chain is Teichoic acids export ATP-binding protein TagH from Lactococcus lactis subsp. lactis (strain IL1403) (Streptococcus lactis).